The primary structure comprises 327 residues: Lipoyl synthase (327 aa).

[4Fe-4S] cluster is bound by residues cysteine 74, cysteine 79, cysteine 85, cysteine 100, cysteine 104, cysteine 107, and serine 314. Positions 86 to 303 (FSGGTATFMI…AEEGERMGFK (218 aa)) constitute a Radical SAM core domain.

The protein belongs to the radical SAM superfamily. Lipoyl synthase family. Requires [4Fe-4S] cluster as cofactor.

The protein resides in the cytoplasm. It carries out the reaction [[Fe-S] cluster scaffold protein carrying a second [4Fe-4S](2+) cluster] + N(6)-octanoyl-L-lysyl-[protein] + 2 oxidized [2Fe-2S]-[ferredoxin] + 2 S-adenosyl-L-methionine + 4 H(+) = [[Fe-S] cluster scaffold protein] + N(6)-[(R)-dihydrolipoyl]-L-lysyl-[protein] + 4 Fe(3+) + 2 hydrogen sulfide + 2 5'-deoxyadenosine + 2 L-methionine + 2 reduced [2Fe-2S]-[ferredoxin]. It participates in protein modification; protein lipoylation via endogenous pathway; protein N(6)-(lipoyl)lysine from octanoyl-[acyl-carrier-protein]: step 2/2. In terms of biological role, catalyzes the radical-mediated insertion of two sulfur atoms into the C-6 and C-8 positions of the octanoyl moiety bound to the lipoyl domains of lipoate-dependent enzymes, thereby converting the octanoylated domains into lipoylated derivatives. The chain is Lipoyl synthase from Pseudomonas paraeruginosa (strain DSM 24068 / PA7) (Pseudomonas aeruginosa (strain PA7)).